The following is a 340-amino-acid chain: Methionine import ATP-binding protein MetN 2 (340 aa).

In terms of domain architecture, ABC transporter spans 2–241; it reads ITLQNVVKEY…PQEKVTQRFV (240 aa). 38–45 serves as a coordination point for ATP; it reads GYSGAGKS.

The protein belongs to the ABC transporter superfamily. Methionine importer (TC 3.A.1.24) family. In terms of assembly, the complex is composed of two ATP-binding proteins (MetN), two transmembrane proteins (MetI) and a solute-binding protein (MetQ).

The protein resides in the cell membrane. The catalysed reaction is L-methionine(out) + ATP + H2O = L-methionine(in) + ADP + phosphate + H(+). The enzyme catalyses D-methionine(out) + ATP + H2O = D-methionine(in) + ADP + phosphate + H(+). Part of the ABC transporter complex MetNIQ involved in methionine import. Responsible for energy coupling to the transport system. The chain is Methionine import ATP-binding protein MetN 2 from Listeria monocytogenes serovar 1/2a (strain ATCC BAA-679 / EGD-e).